The primary structure comprises 521 residues: Phosphoethanolamine transferase EptA (521 aa).

The next 6 membrane-spanning stretches (helical) occupy residues 18–38 (AGLLYSLIFGVLYHFPLFVYV), 47–67 (FIAMMVVVLFCVNGALFLALG), 79–99 (IVFSLLNSVAFYFISAYKVFL), 118–138 (FLSVKLFVFIVVFGVLPGYVI), 150–170 (APFLAILALVFIFIASALANT), and 182–202 (FIGGLILPFAYSVNAFRVSAL).

This sequence belongs to the phosphoethanolamine transferase family. EptA subfamily.

It localises to the cell inner membrane. The protein operates within bacterial outer membrane biogenesis; LPS lipid A biosynthesis. Functionally, probably catalyzes the addition of a phosphoethanolamine moiety to the dephosphorylated 1-position of the disaccharide backbone of lipid A. Lipid A that is 1-phosphorylated is not a substrate for this enzyme. This chain is Phosphoethanolamine transferase EptA, found in Helicobacter pylori (strain ATCC 700392 / 26695) (Campylobacter pylori).